We begin with the raw amino-acid sequence, 145 residues long: Cytochrome c2 (145 aa).

Residues Met1 to Ala21 form the signal peptide. At Gln22 the chain carries Pyrrolidone carboxylic acid. Cys36, Cys39, His40, and Met121 together coordinate heme c.

It belongs to the cytochrome c family. In terms of processing, binds 1 heme c group covalently per subunit.

Its subcellular location is the periplasm. Functionally, cytochrome c2 is found mainly in purple, non-sulfur, photosynthetic bacteria where it functions as the electron donor to the oxidized bacteriochlorophyll in the photophosphorylation pathway. However, it may also have a role in the respiratory chain and is found in some non-photosynthetic bacteria. This is Cytochrome c2 (cycA) from Cereibacter sphaeroides (strain ATCC 17023 / DSM 158 / JCM 6121 / CCUG 31486 / LMG 2827 / NBRC 12203 / NCIMB 8253 / ATH 2.4.1.) (Rhodobacter sphaeroides).